We begin with the raw amino-acid sequence, 566 residues long: Sulfite reductase [NADPH] hemoprotein beta-component (566 aa).

[4Fe-4S] cluster-binding residues include Cys430, Cys436, Cys475, and Cys479. Siroheme is bound at residue Cys479.

Belongs to the nitrite and sulfite reductase 4Fe-4S domain family. In terms of assembly, alpha(8)-beta(8). The alpha component is a flavoprotein, the beta component is a hemoprotein. The cofactor is siroheme. Requires [4Fe-4S] cluster as cofactor.

The enzyme catalyses hydrogen sulfide + 3 NADP(+) + 3 H2O = sulfite + 3 NADPH + 4 H(+). The protein operates within sulfur metabolism; hydrogen sulfide biosynthesis; hydrogen sulfide from sulfite (NADPH route): step 1/1. Functionally, component of the sulfite reductase complex that catalyzes the 6-electron reduction of sulfite to sulfide. This is one of several activities required for the biosynthesis of L-cysteine from sulfate. The chain is Sulfite reductase [NADPH] hemoprotein beta-component from Baumannia cicadellinicola subsp. Homalodisca coagulata.